Consider the following 95-residue polypeptide: Pyrimidine/purine nucleoside phosphorylase (95 aa).

Belongs to the nucleoside phosphorylase PpnP family.

It catalyses the reaction a purine D-ribonucleoside + phosphate = a purine nucleobase + alpha-D-ribose 1-phosphate. The enzyme catalyses adenosine + phosphate = alpha-D-ribose 1-phosphate + adenine. It carries out the reaction cytidine + phosphate = cytosine + alpha-D-ribose 1-phosphate. The catalysed reaction is guanosine + phosphate = alpha-D-ribose 1-phosphate + guanine. It catalyses the reaction inosine + phosphate = alpha-D-ribose 1-phosphate + hypoxanthine. The enzyme catalyses thymidine + phosphate = 2-deoxy-alpha-D-ribose 1-phosphate + thymine. It carries out the reaction uridine + phosphate = alpha-D-ribose 1-phosphate + uracil. The catalysed reaction is xanthosine + phosphate = alpha-D-ribose 1-phosphate + xanthine. In terms of biological role, catalyzes the phosphorolysis of diverse nucleosides, yielding D-ribose 1-phosphate and the respective free bases. Can use uridine, adenosine, guanosine, cytidine, thymidine, inosine and xanthosine as substrates. Also catalyzes the reverse reactions. In Yersinia pestis bv. Antiqua (strain Antiqua), this protein is Pyrimidine/purine nucleoside phosphorylase.